Here is a 1791-residue protein sequence, read N- to C-terminus: Brefeldin A-inhibited guanine nucleotide-exchange protein 2 (1791 aa).

Met-1 carries the post-translational modification N-acetylmethionine. Positions 2 to 224 (QESQTKSMFV…KPQSPVIQAT (223 aa)) are DCB; DCB:DCB domain and DCB:HUS domain interaction. Disordered stretches follow at residues 208–292 (LEKP…DNGA) and 311–350 (AAEK…IADD). 3 positions are modified to phosphoserine: Ser-214, Ser-218, and Ser-227. The span at 214–225 (SKPQSPVIQATA) shows a compositional bias: polar residues. Over residues 233-243 (LKQSQAQSKPT) the composition is skewed to polar residues. A Phosphothreonine modification is found at Thr-244. Residues 244-257 (TPEKTELPNGDHAR) show a composition bias toward basic and acidic residues. Ser-277 is subject to Phosphoserine. Phosphoserine is present on residues Ser-355 and Ser-356. Positions 515-535 (ADAQCVVDIYVNYDCDLNAAN) are HUS; DCB:HUS domain interaction. Ser-621 is subject to Phosphoserine. Phosphothreonine is present on Thr-623. Ser-624 carries the post-translational modification Phosphoserine. Position 633 is a phosphothreonine (Thr-633). The region spanning 661 to 792 (FNKKPKRGIQ…IIMLTTDLHS (132 aa)) is the SEC7 domain. Residues Ser-707, Ser-1518, Ser-1520, Ser-1521, Ser-1532, Ser-1535, Ser-1541, and Ser-1788 each carry the phosphoserine modification.

As to quaternary structure, homodimer. Interacts with ARFGEF1/BIG1; both proteins are probably part of the same or very similar macromolecular complexes. Interacts with PRKAR1A, PRKAR2A, PRKAR1B, PRKAR2B, PPP1CC, PDE3A, TNFRSF1A, MYCBP and EXOC7. Interacts with GABRB1, GABRB2 and GABRB3. In terms of processing, in vitro phosphorylated by PKA reducing its GEF activity and dephosphorylated by phosphatase PP1. Expressed in brain (at protein level).

The protein localises to the cytoplasm. Its subcellular location is the membrane. It localises to the golgi apparatus. It is found in the perinuclear region. The protein resides in the trans-Golgi network. The protein localises to the endosome. Its subcellular location is the cytoskeleton. It localises to the microtubule organizing center. It is found in the centrosome. The protein resides in the cell projection. The protein localises to the dendrite. Its subcellular location is the cytoplasmic vesicle. It localises to the synapse. Its activity is regulated as follows. Inhibited by brefeldin A. Functionally, promotes guanine-nucleotide exchange on ARF1 and ARF3 and to a lower extent on ARF5 and ARF6. Promotes the activation of ARF1/ARF5/ARF6 through replacement of GDP with GTP. Involved in the regulation of Golgi vesicular transport. Required for the integrity of the endosomal compartment. Involved in trafficking from the trans-Golgi network (TGN) to endosomes and is required for membrane association of the AP-1 complex and GGA1. Seems to be involved in recycling of the transferrin receptor from recycling endosomes to the plasma membrane. Probably is involved in the exit of GABA(A) receptors from the endoplasmic reticulum. Involved in constitutive release of tumor necrosis factor receptor 1 via exosome-like vesicles; the function seems to involve PKA and specifically PRKAR2B. Proposed to act as A kinase-anchoring protein (AKAP) and may mediate crosstalk between Arf and PKA pathways. The protein is Brefeldin A-inhibited guanine nucleotide-exchange protein 2 (Arfgef2) of Rattus norvegicus (Rat).